The sequence spans 426 residues: 3-phosphoshikimate 1-carboxyvinyltransferase (426 aa).

Lysine 22, serine 23, and arginine 27 together coordinate 3-phosphoshikimate. Lysine 22 serves as a coordination point for phosphoenolpyruvate. Positions 96 and 124 each coordinate phosphoenolpyruvate. 3-phosphoshikimate is bound by residues serine 170, serine 171, glutamine 172, serine 198, aspartate 314, asparagine 337, and lysine 341. Residue glutamine 172 participates in phosphoenolpyruvate binding. Aspartate 314 serves as the catalytic Proton acceptor. 3 residues coordinate phosphoenolpyruvate: arginine 345, arginine 387, and lysine 412.

It belongs to the EPSP synthase family. As to quaternary structure, monomer.

The protein localises to the cytoplasm. It carries out the reaction 3-phosphoshikimate + phosphoenolpyruvate = 5-O-(1-carboxyvinyl)-3-phosphoshikimate + phosphate. It participates in metabolic intermediate biosynthesis; chorismate biosynthesis; chorismate from D-erythrose 4-phosphate and phosphoenolpyruvate: step 6/7. Its function is as follows. Catalyzes the transfer of the enolpyruvyl moiety of phosphoenolpyruvate (PEP) to the 5-hydroxyl of shikimate-3-phosphate (S3P) to produce enolpyruvyl shikimate-3-phosphate and inorganic phosphate. The polypeptide is 3-phosphoshikimate 1-carboxyvinyltransferase (Shewanella halifaxensis (strain HAW-EB4)).